The sequence spans 219 residues: ATP-dependent Clp protease proteolytic subunit 4 (219 aa).

The Nucleophile role is filled by Ser-125. Residue His-150 is part of the active site.

Belongs to the peptidase S14 family. As to quaternary structure, fourteen ClpP subunits assemble into 2 heptameric rings which stack back to back to give a disk-like structure with a central cavity, resembling the structure of eukaryotic proteasomes.

It localises to the cytoplasm. The enzyme catalyses Hydrolysis of proteins to small peptides in the presence of ATP and magnesium. alpha-casein is the usual test substrate. In the absence of ATP, only oligopeptides shorter than five residues are hydrolyzed (such as succinyl-Leu-Tyr-|-NHMec, and Leu-Tyr-Leu-|-Tyr-Trp, in which cleavage of the -Tyr-|-Leu- and -Tyr-|-Trp bonds also occurs).. Its function is as follows. Cleaves peptides in various proteins in a process that requires ATP hydrolysis. Has a chymotrypsin-like activity. Plays a major role in the degradation of misfolded proteins. This chain is ATP-dependent Clp protease proteolytic subunit 4, found in Prochlorococcus marinus (strain MIT 9312).